The sequence spans 229 residues: Putative N-acetylmannosamine-6-phosphate 2-epimerase 2 (229 aa).

The protein belongs to the NanE family.

The catalysed reaction is an N-acyl-D-glucosamine 6-phosphate = an N-acyl-D-mannosamine 6-phosphate. It participates in amino-sugar metabolism; N-acetylneuraminate degradation; D-fructose 6-phosphate from N-acetylneuraminate: step 3/5. Its function is as follows. Converts N-acetylmannosamine-6-phosphate (ManNAc-6-P) to N-acetylglucosamine-6-phosphate (GlcNAc-6-P). The protein is Putative N-acetylmannosamine-6-phosphate 2-epimerase 2 of Salmonella paratyphi A (strain ATCC 9150 / SARB42).